The chain runs to 493 residues: Glycerol kinase (493 aa).

Thr12 is an ADP binding site. Positions 12, 13, and 14 each coordinate ATP. Thr12 provides a ligand contact to sn-glycerol 3-phosphate. Position 16 (Arg16) interacts with ADP. Residues Arg82, Glu83, Tyr132, and Asp239 each coordinate sn-glycerol 3-phosphate. Glycerol is bound by residues Arg82, Glu83, Tyr132, Asp239, and Gln240. Residues Thr261 and Gly303 each coordinate ADP. ATP is bound by residues Thr261, Gly303, Gln307, and Gly402. ADP contacts are provided by Gly402 and Asn406.

Belongs to the FGGY kinase family.

It carries out the reaction glycerol + ATP = sn-glycerol 3-phosphate + ADP + H(+). It participates in polyol metabolism; glycerol degradation via glycerol kinase pathway; sn-glycerol 3-phosphate from glycerol: step 1/1. Key enzyme in the regulation of glycerol uptake and metabolism. Catalyzes the phosphorylation of glycerol to yield sn-glycerol 3-phosphate. This chain is Glycerol kinase, found in Thermococcus gammatolerans (strain DSM 15229 / JCM 11827 / EJ3).